We begin with the raw amino-acid sequence, 498 residues long: Peptidase inhibitor 16 (498 aa).

The N-terminal stretch at 1–29 (MHGSCSPWVMLPPPLLLLLLLIATGPTTA) is a signal peptide. The SCP domain maps to 39–167 (VDLHNQYRAQ…ANIHLLVCNY (129 aa)). N116 carries an N-linked (GlcNAc...) asparagine glycan. 3 disordered regions span residues 204–277 (NPEK…GPSS), 317–407 (PKSM…SPLS), and 419–467 (ERGG…ENPE). Polar residues-rich tracts occupy residues 218–277 (VPST…GPSS) and 344–353 (LTESGESVPQ). Residues 367–380 (PEAILPEAEAAPTE) are compositionally biased toward low complexity. The segment covering 383–397 (VELREPEAESPKAES) has biased composition (basic and acidic residues). Residues 437-447 (SLPTFPSASGN) are compositionally biased toward polar residues. N447 is a glycosylation site (N-linked (GlcNAc...) asparagine).

Belongs to the CRISP family. Interacts with PSP94/MSMB. N-glycosylated. In terms of tissue distribution, expressed strongly in aorta and skin, and weakly in adipose tissue (at protein level). In heart, found in the extracellular space surrounding cardiomyocytes (at protein level).

The protein resides in the secreted. In terms of biological role, may inhibit cardiomyocyte growth. The polypeptide is Peptidase inhibitor 16 (Pi16) (Mus musculus (Mouse)).